Consider the following 355-residue polypeptide: UDP-3-O-acylglucosamine N-acyltransferase (355 aa).

His258 (proton acceptor) is an active-site residue.

Belongs to the transferase hexapeptide repeat family. LpxD subfamily. Homotrimer.

The catalysed reaction is a UDP-3-O-[(3R)-3-hydroxyacyl]-alpha-D-glucosamine + a (3R)-hydroxyacyl-[ACP] = a UDP-2-N,3-O-bis[(3R)-3-hydroxyacyl]-alpha-D-glucosamine + holo-[ACP] + H(+). The protein operates within bacterial outer membrane biogenesis; LPS lipid A biosynthesis. Its function is as follows. Catalyzes the N-acylation of UDP-3-O-acylglucosamine using 3-hydroxyacyl-ACP as the acyl donor. Is involved in the biosynthesis of lipid A, a phosphorylated glycolipid that anchors the lipopolysaccharide to the outer membrane of the cell. The protein is UDP-3-O-acylglucosamine N-acyltransferase of Bradyrhizobium sp. (strain ORS 278).